We begin with the raw amino-acid sequence, 625 residues long: DNA mismatch repair protein MutL (625 aa).

The protein belongs to the DNA mismatch repair MutL/HexB family.

Functionally, this protein is involved in the repair of mismatches in DNA. It is required for dam-dependent methyl-directed DNA mismatch repair. May act as a 'molecular matchmaker', a protein that promotes the formation of a stable complex between two or more DNA-binding proteins in an ATP-dependent manner without itself being part of a final effector complex. This chain is DNA mismatch repair protein MutL, found in Azorhizobium caulinodans (strain ATCC 43989 / DSM 5975 / JCM 20966 / LMG 6465 / NBRC 14845 / NCIMB 13405 / ORS 571).